The following is a 104-amino-acid chain: UPF0145 protein cbdbA1711 (104 aa).

It belongs to the UPF0145 family.

This Dehalococcoides mccartyi (strain CBDB1) protein is UPF0145 protein cbdbA1711.